The sequence spans 107 residues: Nucleoid-associated protein RC1_2305 (107 aa).

Belongs to the YbaB/EbfC family. As to quaternary structure, homodimer.

It localises to the cytoplasm. Its subcellular location is the nucleoid. Its function is as follows. Binds to DNA and alters its conformation. May be involved in regulation of gene expression, nucleoid organization and DNA protection. This chain is Nucleoid-associated protein RC1_2305, found in Rhodospirillum centenum (strain ATCC 51521 / SW).